Consider the following 865-residue polypeptide: Xylosyltransferase 2 (865 aa).

Residues 1–15 lie on the Cytoplasmic side of the membrane; it reads MVASARVQKLVRRYK. A helical; Signal-anchor for type II membrane protein membrane pass occupies residues 16–36; that stretch reads LAIATALAILLLQGLVVWSFS. Topologically, residues 37–865 are lumenal; it reads GLEEDEAGEK…GPVKADGRLR (829 aa). The tract at residues 41 to 157 is disordered; sequence DEAGEKGRQR…EGAPQPTDNG (117 aa). Positions 53–65 are enriched in basic and acidic residues; that stretch reads RPLDPGEGSKDTD. Positions 73–82 are enriched in basic residues; sequence STGRRHGRWR. Residue asparagine 122 is glycosylated (N-linked (GlcNAc...) asparagine). Residues 125–137 are compositionally biased toward low complexity; the sequence is GAAAGEALVGAAG. Intrachain disulfides connect cysteine 162-cysteine 190, cysteine 206-cysteine 448, cysteine 467-cysteine 480, and cysteine 469-cysteine 478. UDP-alpha-D-xylose contacts are provided by residues valine 239, aspartate 267, and 296 to 298; that span reads TIW. Asparagine 327 carries an N-linked (GlcNAc...) asparagine glycan. Residue 400–401 coordinates UDP-alpha-D-xylose; the sequence is DW. Residues serine 481 and 504–505 each bind UDP-alpha-D-xylose; that span reads RK. Cystine bridges form between cysteine 581–cysteine 833 and cysteine 826–cysteine 839. The N-linked (GlcNAc...) asparagine glycan is linked to asparagine 683. The tract at residues 846–865 is disordered; that stretch reads SLSPDPKSELGPVKADGRLR.

It belongs to the glycosyltransferase 14 family. XylT subfamily. As to quaternary structure, monomer. Mg(2+) is required as a cofactor. It depends on Mn(2+) as a cofactor. Post-translationally, contains disulfide bonds.

The protein resides in the golgi apparatus membrane. Its subcellular location is the secreted. The enzyme catalyses UDP-alpha-D-xylose + L-seryl-[protein] = 3-O-(beta-D-xylosyl)-L-seryl-[protein] + UDP + H(+). It functions in the pathway glycan metabolism; chondroitin sulfate biosynthesis. It participates in glycan metabolism; heparan sulfate biosynthesis. In terms of biological role, catalyzes the first step in the biosynthesis of chondroitin sulfate, heparan sulfate and dermatan sulfate proteoglycans, such as DCN. Transfers D-xylose from UDP-D-xylose to specific serine residues of the core protein. This chain is Xylosyltransferase 2 (XYLT2), found in Pan troglodytes (Chimpanzee).